Consider the following 208-residue polypeptide: Ribosomal RNA small subunit methyltransferase G (208 aa).

Residues glycine 74, leucine 79, 125 to 126, and arginine 140 contribute to the S-adenosyl-L-methionine site; that span reads VE.

It belongs to the methyltransferase superfamily. RNA methyltransferase RsmG family.

It localises to the cytoplasm. It carries out the reaction guanosine(527) in 16S rRNA + S-adenosyl-L-methionine = N(7)-methylguanosine(527) in 16S rRNA + S-adenosyl-L-homocysteine. In terms of biological role, specifically methylates the N7 position of guanine in position 527 of 16S rRNA. The chain is Ribosomal RNA small subunit methyltransferase G from Shewanella denitrificans (strain OS217 / ATCC BAA-1090 / DSM 15013).